The following is a 177-amino-acid chain: ATP synthase subunit delta (177 aa).

It belongs to the ATPase delta chain family. In terms of assembly, F-type ATPases have 2 components, F(1) - the catalytic core - and F(0) - the membrane proton channel. F(1) has five subunits: alpha(3), beta(3), gamma(1), delta(1), epsilon(1). F(0) has three main subunits: a(1), b(2) and c(10-14). The alpha and beta chains form an alternating ring which encloses part of the gamma chain. F(1) is attached to F(0) by a central stalk formed by the gamma and epsilon chains, while a peripheral stalk is formed by the delta and b chains.

It is found in the cell inner membrane. Functionally, f(1)F(0) ATP synthase produces ATP from ADP in the presence of a proton or sodium gradient. F-type ATPases consist of two structural domains, F(1) containing the extramembraneous catalytic core and F(0) containing the membrane proton channel, linked together by a central stalk and a peripheral stalk. During catalysis, ATP synthesis in the catalytic domain of F(1) is coupled via a rotary mechanism of the central stalk subunits to proton translocation. Its function is as follows. This protein is part of the stalk that links CF(0) to CF(1). It either transmits conformational changes from CF(0) to CF(1) or is implicated in proton conduction. The chain is ATP synthase subunit delta from Aeromonas salmonicida (strain A449).